We begin with the raw amino-acid sequence, 207 residues long: N-(5'-phosphoribosyl)anthranilate isomerase (207 aa).

It belongs to the TrpF family.

It catalyses the reaction N-(5-phospho-beta-D-ribosyl)anthranilate = 1-(2-carboxyphenylamino)-1-deoxy-D-ribulose 5-phosphate. The protein operates within amino-acid biosynthesis; L-tryptophan biosynthesis; L-tryptophan from chorismate: step 3/5. The protein is N-(5'-phosphoribosyl)anthranilate isomerase of Halorhodospira halophila (strain DSM 244 / SL1) (Ectothiorhodospira halophila (strain DSM 244 / SL1)).